The sequence spans 319 residues: Acetyl esterase (319 aa).

The short motif at 91–93 (HGG) is the Involved in the stabilization of the negatively charged intermediate by the formation of the oxyanion hole element. Active-site residues include Ser165, Asp262, and His292.

This sequence belongs to the 'GDXG' lipolytic enzyme family. As to quaternary structure, homodimer. Interacts with MalT and MelA.

It is found in the cytoplasm. Functionally, displays esterase activity towards short chain fatty esters (acyl chain length of up to 8 carbons). Able to hydrolyze triacetylglycerol (triacetin) and tributyrylglycerol (tributyrin), but not trioleylglycerol (triolein) or cholesterol oleate. Negatively regulates MalT activity by antagonizing maltotriose binding. Inhibits MelA galactosidase activity. This chain is Acetyl esterase, found in Escherichia coli O7:K1 (strain IAI39 / ExPEC).